Reading from the N-terminus, the 302-residue chain is MFFRNLTLFRFPTTLDFSEIETLLPQVQLKPVGPLEMSSRGFISPFGRDEQDVLSHRLEDFLWLTVGGEDKILPGAVVNDLLERKVAEIEEKEGRRPGGKARKRLKDDLIHELLPRAFVKSSRTDAILDLQHGYIAVNTSSRKSGENVMSEIRGALGSFPALPLNAEVAPRAILTGWIAGEPLPEGLSLGEECEMKDPIEGGAVVKCQHQELRGDEIDKHLEAGKQVTKLALVMDDNLSFVLGDDLVIRKLKFLDGALDQLEHSEGDGARAELDARFALMSAEVRRLFLLLEDALKLSKAEA.

Belongs to the RdgC family.

Its subcellular location is the cytoplasm. It localises to the nucleoid. Its function is as follows. May be involved in recombination. The polypeptide is Recombination-associated protein RdgC (Xanthomonas campestris pv. campestris (strain 8004)).